Here is a 230-residue protein sequence, read N- to C-terminus: Large ribosomal subunit protein uL1 (230 aa).

It belongs to the universal ribosomal protein uL1 family. In terms of assembly, part of the 50S ribosomal subunit.

Its function is as follows. Binds directly to 23S rRNA. The L1 stalk is quite mobile in the ribosome, and is involved in E site tRNA release. Functionally, protein L1 is also a translational repressor protein, it controls the translation of the L11 operon by binding to its mRNA. This Limosilactobacillus fermentum (strain NBRC 3956 / LMG 18251) (Lactobacillus fermentum) protein is Large ribosomal subunit protein uL1.